Reading from the N-terminus, the 353-residue chain is Chorismate synthase (353 aa).

Positions 48 and 54 each coordinate NADP(+). FMN-binding positions include 125–127 (RSS), 238–239 (NA), glycine 278, 293–297 (KPTSS), and arginine 319.

The protein belongs to the chorismate synthase family. In terms of assembly, homotetramer. Requires FMNH2 as cofactor.

It catalyses the reaction 5-O-(1-carboxyvinyl)-3-phosphoshikimate = chorismate + phosphate. It functions in the pathway metabolic intermediate biosynthesis; chorismate biosynthesis; chorismate from D-erythrose 4-phosphate and phosphoenolpyruvate: step 7/7. Functionally, catalyzes the anti-1,4-elimination of the C-3 phosphate and the C-6 proR hydrogen from 5-enolpyruvylshikimate-3-phosphate (EPSP) to yield chorismate, which is the branch point compound that serves as the starting substrate for the three terminal pathways of aromatic amino acid biosynthesis. This reaction introduces a second double bond into the aromatic ring system. This is Chorismate synthase from Buchnera aphidicola subsp. Schizaphis graminum (strain Sg).